The chain runs to 190 residues: dCTP deaminase (190 aa).

113–118 lines the dCTP pocket; sequence KSTYAR. Glu139 serves as the catalytic Proton donor/acceptor. DCTP is bound by residues Gln158, Tyr172, Lys181, and Gln182.

The protein belongs to the dCTP deaminase family. In terms of assembly, homotrimer.

It catalyses the reaction dCTP + H2O + H(+) = dUTP + NH4(+). The protein operates within pyrimidine metabolism; dUMP biosynthesis; dUMP from dCTP (dUTP route): step 1/2. Functionally, catalyzes the deamination of dCTP to dUTP. In Chlamydia abortus (strain DSM 27085 / S26/3) (Chlamydophila abortus), this protein is dCTP deaminase.